A 221-amino-acid polypeptide reads, in one-letter code: Sugar transporter SWEET1 (221 aa).

Transmembrane regions (helical) follow at residues 3–23 (AGGV…LGMF), 44–63 (FLPF…YGVL), 68–88 (TLII…LAYL), 102–122 (ATLL…VPDL), 129–149 (LGLF…ADLA), 160–180 (LSFS…IYGF), and 186–206 (YITV…VLFY). The region spanning 10–94 (FLSSACVLFT…LAYLHYSPQK (85 aa)) is the MtN3/slv 1 domain. In terms of domain architecture, MtN3/slv 2 spans 127–212 (QQLGLFCSVF…VLFYKYPPEQ (86 aa)). A mediates interaction with TRPV2 region spans residues 149–221 (AKIIQTKSTQ…QDTKYRLLQT (73 aa)).

This sequence belongs to the SWEET sugar transporter family. Interacts with TRPV2; the interaction probably occurs intracellularly and depends on TRPV2 N-glycosylation.

It is found in the golgi apparatus membrane. Its subcellular location is the cell membrane. Mediates sugar transport across membranes. May stimulate V(D)J recombination by the activation of RAG1. In Rattus norvegicus (Rat), this protein is Sugar transporter SWEET1 (Slc50a1).